The sequence spans 113 residues: U11-theraphotoxin-Hhn1a (113 aa).

Residues 1–21 (MNTVRVTFLLVFVLAVSLGQA) form the signal peptide. Residues 22 to 74 (DKDENRMEMQEKTEQGNSYLDFAENLLLQKLEELEAKLLEEDSEESRNSRQKR) constitute a propeptide that is removed on maturation. Positions 60–69 (LEEDSEESRN) are enriched in basic and acidic residues. Positions 60–83 (LEEDSEESRNSRQKRCIGEGVPCD) are disordered. 3 disulfides stabilise this stretch: Cys75–Cys90, Cys82–Cys95, and Cys89–Cys110.

This sequence belongs to the neurotoxin 14 (magi-1) family. 01 (HNTX-16) subfamily. In terms of tissue distribution, expressed by the venom gland.

It localises to the secreted. In terms of biological role, probable ion channel inhibitor. The sequence is that of U11-theraphotoxin-Hhn1a from Cyriopagopus hainanus (Chinese bird spider).